The following is a 195-amino-acid chain: Peptidyl-tRNA hydrolase (195 aa).

Tyrosine 18 is a binding site for tRNA. Histidine 23 acts as the Proton acceptor in catalysis. TRNA is bound by residues tyrosine 69, asparagine 71, and asparagine 117.

The protein belongs to the PTH family. In terms of assembly, monomer.

It is found in the cytoplasm. It catalyses the reaction an N-acyl-L-alpha-aminoacyl-tRNA + H2O = an N-acyl-L-amino acid + a tRNA + H(+). Functionally, hydrolyzes ribosome-free peptidyl-tRNAs (with 1 or more amino acids incorporated), which drop off the ribosome during protein synthesis, or as a result of ribosome stalling. In terms of biological role, catalyzes the release of premature peptidyl moieties from peptidyl-tRNA molecules trapped in stalled 50S ribosomal subunits, and thus maintains levels of free tRNAs and 50S ribosomes. This is Peptidyl-tRNA hydrolase from Nitrosomonas europaea (strain ATCC 19718 / CIP 103999 / KCTC 2705 / NBRC 14298).